Consider the following 337-residue polypeptide: Holliday junction branch migration complex subunit RuvB (337 aa).

A disordered region spans residues 1–27 (MIEADRLVHAQPQGTEERDEQIDRAMR). The segment at 4–187 (ADRLVHAQPQ…FGIPLRLEFY (184 aa)) is large ATPase domain (RuvB-L). ATP contacts are provided by residues Arg-27, Gly-68, Lys-71, Thr-72, Thr-73, 134–136 (EDY), Arg-177, Tyr-187, and Arg-224. Thr-72 contributes to the Mg(2+) binding site. Residues 188–258 (NVKDLSSIVT…VAESALDMLD (71 aa)) are small ATPAse domain (RuvB-S). The segment at 261 to 337 (VEGFDYMDRK…YQHFNLIQPE (77 aa)) is head domain (RuvB-H). 3 residues coordinate DNA: Arg-297, Arg-316, and Arg-321.

The protein belongs to the RuvB family. In terms of assembly, homohexamer. Forms an RuvA(8)-RuvB(12)-Holliday junction (HJ) complex. HJ DNA is sandwiched between 2 RuvA tetramers; dsDNA enters through RuvA and exits via RuvB. An RuvB hexamer assembles on each DNA strand where it exits the tetramer. Each RuvB hexamer is contacted by two RuvA subunits (via domain III) on 2 adjacent RuvB subunits; this complex drives branch migration. In the full resolvosome a probable DNA-RuvA(4)-RuvB(12)-RuvC(2) complex forms which resolves the HJ.

It localises to the cytoplasm. It carries out the reaction ATP + H2O = ADP + phosphate + H(+). Its function is as follows. The RuvA-RuvB-RuvC complex processes Holliday junction (HJ) DNA during genetic recombination and DNA repair, while the RuvA-RuvB complex plays an important role in the rescue of blocked DNA replication forks via replication fork reversal (RFR). RuvA specifically binds to HJ cruciform DNA, conferring on it an open structure. The RuvB hexamer acts as an ATP-dependent pump, pulling dsDNA into and through the RuvAB complex. RuvB forms 2 homohexamers on either side of HJ DNA bound by 1 or 2 RuvA tetramers; 4 subunits per hexamer contact DNA at a time. Coordinated motions by a converter formed by DNA-disengaged RuvB subunits stimulates ATP hydrolysis and nucleotide exchange. Immobilization of the converter enables RuvB to convert the ATP-contained energy into a lever motion, pulling 2 nucleotides of DNA out of the RuvA tetramer per ATP hydrolyzed, thus driving DNA branch migration. The RuvB motors rotate together with the DNA substrate, which together with the progressing nucleotide cycle form the mechanistic basis for DNA recombination by continuous HJ branch migration. Branch migration allows RuvC to scan DNA until it finds its consensus sequence, where it cleaves and resolves cruciform DNA. The chain is Holliday junction branch migration complex subunit RuvB from Shewanella loihica (strain ATCC BAA-1088 / PV-4).